The following is a 281-amino-acid chain: Nicotinamide/nicotinic acid mononucleotide adenylyltransferase 1 (281 aa).

Beta-nicotinamide D-ribonucleotide-binding residues include G15 and S16. G15, S16, F17, and M23 together coordinate NAD(+). 15-17 (GSF) is an ATP binding site. H24 contributes to the ATP binding site. The beta-nicotinamide D-ribonucleotide site is built by Y55 and K57. K57 provides a ligand contact to NAD(+). ATP is bound at residue K58. The beta-nicotinamide D-ribonucleotide site is built by W92 and T95. NAD(+)-binding residues include W92 and T95. The segment at 113 to 143 (PQQNSPVLEKPGRKRKWAEQKQDISEKKSLE) is disordered. S117 is subject to Phosphoserine. The Nuclear localization signal signature appears at 123–129 (PGRKRKW). A compositionally biased stretch (basic and acidic residues) spans 129-143 (WAEQKQDISEKKSLE). NAD(+) contacts are provided by G158, D160, L170, W171, E217, and N221. ATP is bound at residue 158 to 160 (GAD). 2 residues coordinate beta-nicotinamide D-ribonucleotide: L170 and W171. 226–229 (TKIR) contacts ATP.

Belongs to the eukaryotic NMN adenylyltransferase family. As to quaternary structure, homohexamer. Interacts with ADPRT/PARP1. Requires Zn(2+) as cofactor. It depends on Mg(2+) as a cofactor.

The protein resides in the nucleus. The enzyme catalyses beta-nicotinamide D-ribonucleotide + ATP + H(+) = diphosphate + NAD(+). It carries out the reaction nicotinate beta-D-ribonucleotide + ATP + H(+) = deamido-NAD(+) + diphosphate. Its pathway is cofactor biosynthesis; NAD(+) biosynthesis; NAD(+) from nicotinamide D-ribonucleotide: step 1/1. It participates in cofactor biosynthesis; NAD(+) biosynthesis; deamido-NAD(+) from nicotinate D-ribonucleotide: step 1/1. With respect to regulation, activity is strongly inhibited by galotannin. Inhibited by P1-(adenosine-5')-P4-(nicotinic-acid-riboside-5')-tetraphosphate (Nap4AD). Functionally, catalyzes the formation of NAD(+) from nicotinamide mononucleotide (NMN) and ATP. Can also use the deamidated form; nicotinic acid mononucleotide (NaMN) as substrate with the same efficiency. Can use triazofurin monophosphate (TrMP) as substrate. Also catalyzes the reverse reaction, i.e. the pyrophosphorolytic cleavage of NAD(+). For the pyrophosphorolytic activity, prefers NAD(+) and NaAD as substrates and degrades NADH, nicotinic acid adenine dinucleotide phosphate (NHD) and nicotinamide guanine dinucleotide (NGD) less effectively. Involved in the synthesis of ATP in the nucleus, together with PARP1, PARG and NUDT5. Nuclear ATP generation is required for extensive chromatin remodeling events that are energy-consuming. Fails to cleave phosphorylated dinucleotides NADP(+), NADPH and NaADP(+). Also acts as a cofactor for glutamate and aspartate ADP-ribosylation by directing PARP1 catalytic activity to glutamate and aspartate residues on histones. Protects against axonal degeneration following mechanical or toxic insults. Delays axonal degeneration after axotomy. Results in a &gt;10-fold increase in intact neurites 72 hours after injury. Neural protection does not correlate with cellular NAD(+) levels but may still require enzyme activity. This chain is Nicotinamide/nicotinic acid mononucleotide adenylyltransferase 1 (NMNAT1), found in Bos taurus (Bovine).